The primary structure comprises 960 residues: RNA polymerase II subunit A C-terminal domain phosphatase (960 aa).

Residue Met1 is modified to N-acetylmethionine. Residues 178–341 (HRNRKLVLMV…PPAARETQAR (164 aa)) enclose the FCP1 homology domain. Residues 331–580 (APPAARETQA…EEDTDDDDHL (250 aa)) form a disordered region. Positions 439 to 448 (PGVQPTQGDA) are enriched in polar residues. The segment covering 453-463 (LDFDLSSDSES) has biased composition (acidic residues). Ser530 carries the phosphoserine modification. Residues 547-556 (ESQNSEQSGV) show a composition bias toward polar residues. The segment covering 566–578 (VGEEEEEDTDDDD) has biased composition (acidic residues). The BRCT domain occupies 619-718 (LKSKVLADVA…DKVEEQLFPL (100 aa)). 2 positions are modified to phosphoserine: Ser664 and Ser730. The residue at position 770 (Lys770) is an N6-acetyllysine. 2 disordered regions span residues 770-834 (KLIR…MSEA) and 854-948 (DILG…ADEM). 3 positions are modified to phosphoserine: Ser830, Ser860, and Ser863. The span at 854 to 864 (DILGEGSDDSD) shows a compositional bias: acidic residues. A compositionally biased stretch (basic and acidic residues) spans 865–881 (IEKKKPEDQDNEQERAP). Residues 934–947 (SNDDEEGSSSEADE) are compositionally biased toward acidic residues.

In terms of assembly, homodimer. Interacts with GTF2F1. Interacts with WDR77, SNRPB and SNRNP70. In terms of processing, phosphorylated. In the presence of TFIIF, the phosphorylated form has an increased CTD phosphatase activity. The phosphorylation is required for the physical interaction with GTF2F1.

It localises to the nucleus. It is found in the cytoplasm. Its subcellular location is the cytoskeleton. The protein resides in the microtubule organizing center. The protein localises to the centrosome. It localises to the spindle. It is found in the spindle pole. Its subcellular location is the midbody. The catalysed reaction is O-phospho-L-seryl-[protein] + H2O = L-seryl-[protein] + phosphate. It catalyses the reaction O-phospho-L-threonyl-[protein] + H2O = L-threonyl-[protein] + phosphate. Its function is as follows. Processively dephosphorylates 'Ser-2' and 'Ser-5' of the heptad repeats YSPTSPS in the C-terminal domain of the largest RNA polymerase II subunit. This promotes the activity of RNA polymerase II. Plays a role in the exit from mitosis by dephosphorylating crucial mitotic substrates (USP44, CDC20 and WEE1) that are required for M-phase-promoting factor (MPF)/CDK1 inactivation. The polypeptide is RNA polymerase II subunit A C-terminal domain phosphatase (Ctdp1) (Mus musculus (Mouse)).